Here is an 878-residue protein sequence, read N- to C-terminus: NUT family member 2A (878 aa).

Disordered regions lie at residues 273–324 (WSQG…DDSC), 417–566 (QKSQ…LSYT), 627–757 (KEKQ…EEEE), and 775–878 (WLPQ…RCSQ). 2 stretches are compositionally biased toward pro residues: residues 278 to 288 (PLPPPPPPAAQ) and 427 to 444 (CLPPPATPRLEPRGPPAP). The span at 476 to 487 (TKARRPPPRPHR) shows a compositional bias: basic residues. Positions 537–551 (EPEKQREEGEVKQPQ) are enriched in basic and acidic residues.

This sequence belongs to the NUT family.

The protein is NUT family member 2A (NUTM2A) of Homo sapiens (Human).